The sequence spans 279 residues: Urease accessory protein UreD (279 aa).

This sequence belongs to the UreD family. As to quaternary structure, ureD, UreF and UreG form a complex that acts as a GTP-hydrolysis-dependent molecular chaperone, activating the urease apoprotein by helping to assemble the nickel containing metallocenter of UreC. The UreE protein probably delivers the nickel.

It is found in the cytoplasm. Required for maturation of urease via the functional incorporation of the urease nickel metallocenter. The protein is Urease accessory protein UreD of Nitrosospira multiformis (strain ATCC 25196 / NCIMB 11849 / C 71).